A 339-amino-acid chain; its full sequence is Phosphate acyltransferase (339 aa).

This sequence belongs to the PlsX family. Homodimer. Probably interacts with PlsY.

The protein localises to the cytoplasm. The enzyme catalyses a fatty acyl-[ACP] + phosphate = an acyl phosphate + holo-[ACP]. It functions in the pathway lipid metabolism; phospholipid metabolism. Functionally, catalyzes the reversible formation of acyl-phosphate (acyl-PO(4)) from acyl-[acyl-carrier-protein] (acyl-ACP). This enzyme utilizes acyl-ACP as fatty acyl donor, but not acyl-CoA. This Dechloromonas aromatica (strain RCB) protein is Phosphate acyltransferase.